Reading from the N-terminus, the 285-residue chain is ATP phosphoribosyltransferase (285 aa).

The protein belongs to the ATP phosphoribosyltransferase family. Long subfamily. The cofactor is Mg(2+).

The protein resides in the cytoplasm. It carries out the reaction 1-(5-phospho-beta-D-ribosyl)-ATP + diphosphate = 5-phospho-alpha-D-ribose 1-diphosphate + ATP. It participates in amino-acid biosynthesis; L-histidine biosynthesis; L-histidine from 5-phospho-alpha-D-ribose 1-diphosphate: step 1/9. Feedback inhibited by histidine. Functionally, catalyzes the condensation of ATP and 5-phosphoribose 1-diphosphate to form N'-(5'-phosphoribosyl)-ATP (PR-ATP). Has a crucial role in the pathway because the rate of histidine biosynthesis seems to be controlled primarily by regulation of HisG enzymatic activity. This chain is ATP phosphoribosyltransferase, found in Streptomyces coelicolor (strain ATCC BAA-471 / A3(2) / M145).